We begin with the raw amino-acid sequence, 441 residues long: Vacuolar cation/proton exchanger 2 (441 aa).

Topologically, residues 1-69 are cytoplasmic; the sequence is MSCCKVPVLI…PKNSVLNSIK (69 aa). A helical membrane pass occupies residues 70–90; sequence IVIFCNKLNLLLPFGPLAILV. The Extracellular segment spans residues 91–97; sequence HYMIDSK. The helical transmembrane segment at 98–118 threads the bilayer; the sequence is GWVFLLTLVGITPLAERLGYA. Over 119–129 the chain is Cytoplasmic; the sequence is TEQLACYTGPT. Residues 130 to 150 form a helical membrane-spanning segment; the sequence is VGGLLNATFGNVTELIISIFA. Positions 139 to 174 are cation selection; sequence GNVTELIISIFALKNGMIRVVQLTLLGSILSNMLLV. Residues 151–166 are Extracellular-facing; sequence LKNGMIRVVQLTLLGS. A helical membrane pass occupies residues 167 to 187; it reads ILSNMLLVLGCAFFCGGLVFY. At 188–196 the chain is on the cytoplasmic side; it reads QKDQVFDKG. A helical transmembrane segment spans residues 197 to 217; that stretch reads IATVNSGLLLMAVMGILFPAV. Residues 218 to 231 lie on the Extracellular side of the membrane; the sequence is LHYTHSEVHAGSSE. Residues 232–252 traverse the membrane as a helical segment; the sequence is LALSRFSSCIMLIAYAAYLFF. Residues 253–286 are Cytoplasmic-facing; the sequence is QLKSQSNSYSPLDEESNQNEETSAEDEDPEISKW. A helical transmembrane segment spans residues 287 to 307; sequence EAIIWLSILTAWVSLLSGYLV. At 308–311 the chain is on the extracellular side; that stretch reads DAIE. A helical membrane pass occupies residues 312-332; that stretch reads GASVSWNIPIAFISTILLPIV. Over 333-354 the chain is Cytoplasmic; the sequence is GNAAEHAGAIMFAMKDKLDLSL. The segment at 333 to 368 is cation selection; it reads GNAAEHAGAIMFAMKDKLDLSLGVAIGSSIQISMFA. A helical transmembrane segment spans residues 355 to 375; the sequence is GVAIGSSIQISMFAVPFCVVI. Topologically, residues 376-384 are extracellular; the sequence is GWMMGQQMD. Residues 385-405 traverse the membrane as a helical segment; that stretch reads LNFQLFETAMLFITVIVVAFF. Topologically, residues 406–412 are cytoplasmic; that stretch reads LQEGSSN. The helical transmembrane segment at 413–433 threads the bilayer; it reads YFKGLMLILCYLIVAASFFVH. Residues 434 to 441 are Extracellular-facing; it reads EDPHQDGI.

The protein belongs to the Ca(2+):cation antiporter (CaCA) (TC 2.A.19) family. Cation/proton exchanger (CAX) subfamily.

The protein resides in the vacuole membrane. Inhibited by excess of Ca(2+) and Cd(2+), Mn(2+), and Zn(2+). In terms of biological role, vacuolar cation/proton exchanger (CAX). Translocates Ca(2+) and other metal ions into vacuoles using the proton gradient formed by H(+)-ATPase and H(+)-pyrophosphatase. The polypeptide is Vacuolar cation/proton exchanger 2 (CAX2) (Arabidopsis thaliana (Mouse-ear cress)).